A 146-amino-acid polypeptide reads, in one-letter code: Large ribosomal subunit protein uL15 (146 aa).

Positions 1 to 13 are enriched in basic and acidic residues; that stretch reads MKLHELKPSEGSR. Residues 1-54 are disordered; that stretch reads MKLHELKPSEGSRKVRNRVGRGIGSGNGKTAGKGHKGQNARSGGGVRPGFEGGQ. Gly residues-rich tracts occupy residues 21 to 31 and 42 to 52; these read RGIGSGNGKTA and SGGGVRPGFEG.

The protein belongs to the universal ribosomal protein uL15 family. Part of the 50S ribosomal subunit.

Its function is as follows. Binds to the 23S rRNA. The polypeptide is Large ribosomal subunit protein uL15 (Bacillus velezensis (strain DSM 23117 / BGSC 10A6 / LMG 26770 / FZB42) (Bacillus amyloliquefaciens subsp. plantarum)).